The primary structure comprises 102 residues: Large ribosomal subunit protein bL21 (102 aa).

This sequence belongs to the bacterial ribosomal protein bL21 family. As to quaternary structure, part of the 50S ribosomal subunit. Contacts protein L20.

In terms of biological role, this protein binds to 23S rRNA in the presence of protein L20. This is Large ribosomal subunit protein bL21 from Clavibacter sepedonicus (Clavibacter michiganensis subsp. sepedonicus).